Reading from the N-terminus, the 213-residue chain is Nicolin-1 (213 aa).

Part of the neuronal tubulin polyglutamylase complex which contains TPGS1, TPGS2, TTLL1, LRRC49 and NICN1.

It is found in the nucleus. The sequence is that of Nicolin-1 (NICN1) from Canis lupus familiaris (Dog).